The chain runs to 699 residues: Chitinase A1 (699 aa).

Positions 1–41 (MINLNKHTAFKKTAKFFLGLSLLLSVIVPSFALQPATAEAA) are cleaved as a signal peptide. The GH18 domain maps to 44 to 454 (YKIVGYYPSW…NKLKADLPTG (411 aa)). Residues 135–136 (DQ) and 162–165 (GGWT) each bind chitin. Residue Glu-204 is the Proton donor of the active site. Chitin contacts are provided by residues Tyr-205, 277-280 (MTYD), and Trp-433. The tract at residues 449–471 (ADLPTGGTVPPVDTTAPSVPGNA) is disordered. The segment covering 452 to 465 (PTGGTVPPVDTTAP) has biased composition (low complexity). 2 Fibronectin type-III domains span residues 467-553 (VPGN…TAQP) and 562-647 (APTN…TAAE).

It belongs to the glycosyl hydrolase 18 family. Chitinase class II subfamily.

It catalyses the reaction Random endo-hydrolysis of N-acetyl-beta-D-glucosaminide (1-&gt;4)-beta-linkages in chitin and chitodextrins.. The polypeptide is Chitinase A1 (chiA1) (Niallia circulans (Bacillus circulans)).